Here is a 289-residue protein sequence, read N- to C-terminus: Pyridoxal kinase PdxY (289 aa).

Substrate is bound by residues Ser9 and 44–45 (TQ). Residues Asp112, Val144, Glu149, and Lys182 each coordinate ATP. Substrate is bound at residue Asp221.

The protein belongs to the pyridoxine kinase family. PdxY subfamily. In terms of assembly, homodimer. It depends on Mg(2+) as a cofactor.

The catalysed reaction is pyridoxal + ATP = pyridoxal 5'-phosphate + ADP + H(+). It functions in the pathway cofactor metabolism; pyridoxal 5'-phosphate salvage; pyridoxal 5'-phosphate from pyridoxal: step 1/1. Pyridoxal kinase involved in the salvage pathway of pyridoxal 5'-phosphate (PLP). Catalyzes the phosphorylation of pyridoxal to PLP. The protein is Pyridoxal kinase PdxY of Vibrio parahaemolyticus serotype O3:K6 (strain RIMD 2210633).